Consider the following 339-residue polypeptide: Inositol 2-dehydrogenase (339 aa).

The protein belongs to the Gfo/Idh/MocA family. Homotetramer.

It catalyses the reaction myo-inositol + NAD(+) = scyllo-inosose + NADH + H(+). Involved in the oxidation of myo-inositol (MI) to 2-keto-myo-inositol (2KMI or 2-inosose). This Leifsonia xyli subsp. xyli (strain CTCB07) protein is Inositol 2-dehydrogenase.